The primary structure comprises 179 residues: UPF0227 protein Shew185_2404 (179 aa).

This sequence belongs to the UPF0227 family.

This is UPF0227 protein Shew185_2404 from Shewanella baltica (strain OS185).